The chain runs to 416 residues: Histidine--tRNA ligase (416 aa).

It belongs to the class-II aminoacyl-tRNA synthetase family. Homodimer.

Its subcellular location is the cytoplasm. It carries out the reaction tRNA(His) + L-histidine + ATP = L-histidyl-tRNA(His) + AMP + diphosphate + H(+). The sequence is that of Histidine--tRNA ligase from Clostridium kluyveri (strain NBRC 12016).